Reading from the N-terminus, the 652-residue chain is Vacuolar fusion protein MON1 homolog A (652 aa).

A disordered region spans residues Met-102–Ala-141. Residues Ser-128 and Ser-153 each carry the phosphoserine modification. Thr-158 is subject to Phosphothreonine. The disordered stretch occupies residues Thr-158–Arg-185. Position 188 is a phosphoserine (Ser-188). The tract at residues Pro-211–Thr-245 is disordered.

This sequence belongs to the MON1/SAND family. In terms of assembly, interacts with CCZ1. Found in a complex with RMC1, CCZ1, MON1A and MON1B. The MON1A-CCZ1B complex interacts with RIMOC1. The MON1A-CCZ1B complex interacts with RAB7A and this interaction is enhanced in the presence of RIMOC1.

Functionally, plays an important role in membrane trafficking through the secretory apparatus. Not involved in endocytic trafficking to lysosomes. Acts in concert with CCZ1, as a guanine exchange factor (GEF) for RAB7, promotes the exchange of GDP to GTP, converting it from an inactive GDP-bound form into an active GTP-bound form. This is Vacuolar fusion protein MON1 homolog A (MON1A) from Homo sapiens (Human).